Consider the following 359-residue polypeptide: Transcription factor bHLH130 (359 aa).

The residue at position 60 (Ser-60) is a Phosphoserine. The tract at residues 161-186 (EEDEESPSNSNGLRRHCSLSSRPPSS) is disordered. The segment covering 167-184 (PSNSNGLRRHCSLSSRPP) has biased composition (polar residues). In terms of domain architecture, bHLH spans 285–335 (CATHPRSIAERVRRTRISERMRKLQELVPNMDKQTNTSDMLDLAVDYIKDL).

In terms of assembly, homodimer.

The protein resides in the nucleus. This is Transcription factor bHLH130 (BHLH130) from Arabidopsis thaliana (Mouse-ear cress).